Here is a 516-residue protein sequence, read N- to C-terminus: Calcium and calcium/calmodulin-dependent serine/threonine-protein kinase (516 aa).

The Protein kinase domain occupies 13–298 (YEVVDVLGRG…ASDLLRHPWV (286 aa)). Residues 19 to 27 (LGRGGFSIV) and lysine 43 contribute to the ATP site. Aspartate 163 (proton acceptor) is an active-site residue. Threonine 263 is modified (phosphothreonine). Positions 321-334 (ARRKLRAAAIASVL) are calmodulin-binding. Positions 343–363 (KRLRNLLGTHDLTSEELDNLR) form a coiled coil. EF-hand domains lie at 392–427 (SLIP…LRNS), 428–463 (RGDD…LPEE), and 470–505 (TEPG…DSAL). Aspartate 405, asparagine 407, aspartate 409, threonine 411, glutamate 416, aspartate 441, aspartate 443, serine 445, cysteine 447, glutamate 452, aspartate 483, aspartate 485, aspartate 487, lysine 489, and glutamate 494 together coordinate Ca(2+).

It belongs to the protein kinase superfamily. CAMK Ser/Thr protein kinase family. CaMK subfamily. In terms of processing, autophosphorylation. In terms of tissue distribution, mainly expressed in roots and panicles. Detected in leaves, shoots and culms.

The protein resides in the nucleus. The protein localises to the cytoplasm. It localises to the cell membrane. The enzyme catalyses L-seryl-[protein] + ATP = O-phospho-L-seryl-[protein] + ADP + H(+). It catalyses the reaction L-threonyl-[protein] + ATP = O-phospho-L-threonyl-[protein] + ADP + H(+). Calcium- and calmodulin-dependent protein kinase required for arbuscular mycorrhizal (AM) symbiosis. Involved in response to water deprivation stress. Required for abscisic acid-induced antioxidant defense and oxidative stress tolerance during dehydration stress. Functions upstream of MPK1 in an abscisic acid signaling pathway that regulates the activities of antioxidant enzymes and the production of hydrogen peroxide. The sequence is that of Calcium and calcium/calmodulin-dependent serine/threonine-protein kinase (CCAMK) from Oryza sativa subsp. japonica (Rice).